The primary structure comprises 1869 residues: MAQHRCVGGNGGAHTQPSLPALPAHLQSNTHLTGHLASRFHVSLPTAKLSSHAFISINTYTSSSKGQDGGKAGSAQGEAEDMADRAFLRLGHRSENQAILFLGESGSGKTTIRSHILTALLNKTSTPLSTKVSLAAYVFDTLTTTKTATTPTASKAGLFYELQYDTASTTSPLLIGGKLLDHRLERSRITDVPTGERNFHILYYILAGTSAAEKTHLGFGEPDAGTGSKRWRYLGHPTQLKVGINDAQGFQLFKTALRKLEFPRSEIAEICQVLASILHIGQLEFESSENTTVAGDESGGFSHEGGQITTVAKNKDVLAIVAAFLGVSAAELQTTLGYKTKIIHKERVTVMLDPAGARANANELARTLYSLLVAYVIENINQKICAPEEAIVNTVSIIDFPGFSQQSSTGSSLDLLLNNAAAEAMYNLTLQNFFDRKADLLETEEVSVPPTSYFDNSDAVKGLLKTGNGLLSILDDQTRRHRTDMQLLESLRKRFEGKNPAIGVSAATAKLPGSNFLSENTAASFTVRHFAGEVEYSIKGLVEENGEVISGDLLNLVNSTKSDFIARLFGQEALHTVTHPQERTTVMQASVSSKPMRAPSVMSRKIRPGTARTTRQRKESISGRQDTLDDIASERGDSRRPVNKPSEEGASGQFLHSLDNVTKSFHAQNTNAYFVFCLKPNDRRIANQFDSKCVRTQMQTFGIAEISQRIRSADFSVFLPFGEFLGLADVDTLLVGSEREKVEAVVDEKRWPTNEIQIGSTGVFISERCWMEIAQLSDMVTGRFGVPESEGGTPLANMPYGASKERLIAAGNSPYNNDKAKSGYFGSNDIDGRSDAGVSAFGGGDMFKNLDTREQMAERGNEKSMVEVEEFKDSPSRKRWVFITWMLTFFVPEFLIQHLGKMPRKDVRMAWREKLAINFIIWFSCLAAAFILVVFPMLVCPTQYVFTGEETLGLQRKRWKASYAAIRGQVFDIGSFIPSTPCPICHQSALHQYAGTDITGLFPVQVSALCKGTTGSVNPAVLLDYKDTNITDSPNVFNSQDLNSRYHDFRYFTNDTRPDWFSQMMITFRGTYKKGNIGYPAQVVQKMAQQRNAIAILNGRVYDFTKYIAGGAISGSSITNASTDQSLLDFMDPSVVRLFLGPARDDVTPLWDALRLTPTLRKSMQLCLDNLFYLGDVDTRNSVVCNFAKYFILAVTIILCSIIAFKFFAALQFGTKNMPQNLDKFIMCQIPAYTEDEESLRGAIDSAARMRYDDKRKLLIVVCDGMIIGQGNDRPTLRIVLDILGVSETVDPEPLSFESLGEGLKQHNMGKVYSGLYEVQGHIVPFLVVVKVGKPSEVSRPGNRGKRDSQMVIMRFLNRVHYNLPMSPLELEMYHQIRNIIGVNPTFYEYMLQIDADTVVAADSATRFVSAFLDDTRLIACCGETSIANAKSSFITMIQVYEYYISHNLSKAFESLFGSVTCLPGRFSMYRIRAAETGKPLFVSREVVDRYATIRVDTLHMKNLLHLGEDRYLTTLLLKYHNKYKTKYIYRAHAWTIAPDSWKVFLSQRRRWINSTVHNLIELIPMGQLCSFCCFSMRFIVFIDLLSTIIQPFTIAYIVYFIVRMVLTLDLVPVLAFVLLAAVYGLQAIIFILRRKWEMIAWMILYIIAMPIFSFGLPLYAFWHMDDFTWGNTRVVTGEKGKKAVVTDEGKFDPSSIPKKWEEYQSELWDAQTSKDVTRSEASGFSYATKAPVAVSEYGFPGSTPMAHTLPADLGAPRHTTHATHAILASRMSLAHSEMLMAGNRQSQFGGSQFNLPQSGSEMELSNLAGLPSDDALLAEIREILRTADLMTVTKKGVKQELERRFGVNLDSRRAYINSATEALLSGQL.

The region spanning 1-778 (MAQHRCVGGN…CWMEIAQLSD (778 aa)) is the Myosin motor domain. 103–110 (GESGSGKT) contacts ATP. N-linked (GlcNAc...) asparagine glycosylation is found at N122, N290, N427, and N558. Residues 579-653 (HPQERTTVMQ…KPSEEGASGQ (75 aa)) are disordered. The span at 583-593 (RTTVMQASVSS) shows a compositional bias: polar residues. The actin-binding stretch occupies residues 658–682 (LDNVTKSFHAQNTNAYFVFCLKPND). Residue N660 is glycosylated (N-linked (GlcNAc...) asparagine). A run of 2 helical transmembrane segments spans residues 880–900 (WVFI…QHLG) and 919–939 (FIIW…PMLV). N-linked (GlcNAc...) asparagine glycans are attached at residues N1029, N1054, and N1120. The chain crosses the membrane as a helical span at residues 1191 to 1211 (FILAVTIILCSIIAFKFFAAL). N-linked (GlcNAc...) asparagine glycans are attached at residues N1448 and N1554. 3 helical membrane-spanning segments follow: residues 1579–1599 (FIVF…AYIV), 1612–1632 (VPVL…IIFI), and 1639–1659 (MIAW…GLPL). A DEK-C domain is found at 1811–1866 (LPSDDALLAEIREILRTADLMTVTKKGVKQELERRFGVNLDSRRAYINSATEALLS).

The protein in the N-terminal section; belongs to the TRAFAC class myosin-kinesin ATPase superfamily. Myosin family. This sequence in the C-terminal section; belongs to the chitin synthase family. Class V subfamily.

The protein resides in the cell membrane. It is found in the cell septum. The protein localises to the cell tip. The enzyme catalyses [(1-&gt;4)-N-acetyl-beta-D-glucosaminyl](n) + UDP-N-acetyl-alpha-D-glucosamine = [(1-&gt;4)-N-acetyl-beta-D-glucosaminyl](n+1) + UDP + H(+). Functionally, polymerizes chitin, a structural polymer of the cell wall and septum, by transferring the sugar moiety of UDP-GlcNAc to the non-reducing end of the growing chitin polymer. Involved in mycelial growth. The protein is Chitin synthase csm1 of Pyricularia grisea (Crabgrass-specific blast fungus).